A 257-amino-acid polypeptide reads, in one-letter code: Neurotrophin-3 (257 aa).

An N-terminal signal peptide occupies residues 1 to 18; the sequence is MSILFYVIFLAYLRGIQS. A propeptide spanning residues 19 to 138 is cleaved from the precursor; sequence TNMDQRSLPE…VLNRTSRRKR (120 aa). N131 carries N-linked (GlcNAc...) asparagine glycosylation. Intrachain disulfides connect C152/C217, C195/C246, and C205/C248.

This sequence belongs to the NGF-beta family. In terms of tissue distribution, in the embryo, the expression peak at E4.5 and decreases at later stages of development.

It is found in the secreted. Seems to promote the survival of visceral and proprioceptive sensory neurons. The chain is Neurotrophin-3 (NTF3) from Gallus gallus (Chicken).